Consider the following 324-residue polypeptide: Acetyl-coenzyme A carboxylase carboxyl transferase subunit alpha (324 aa).

The CoA carboxyltransferase C-terminal domain occupies 37–291 (KLERRLDKLK…RDFILREWLR (255 aa)).

The protein belongs to the AccA family. Acetyl-CoA carboxylase is a heterohexamer composed of biotin carboxyl carrier protein (AccB), biotin carboxylase (AccC) and two subunits each of ACCase subunit alpha (AccA) and ACCase subunit beta (AccD).

It is found in the cytoplasm. It carries out the reaction N(6)-carboxybiotinyl-L-lysyl-[protein] + acetyl-CoA = N(6)-biotinyl-L-lysyl-[protein] + malonyl-CoA. It functions in the pathway lipid metabolism; malonyl-CoA biosynthesis; malonyl-CoA from acetyl-CoA: step 1/1. Its function is as follows. Component of the acetyl coenzyme A carboxylase (ACC) complex. First, biotin carboxylase catalyzes the carboxylation of biotin on its carrier protein (BCCP) and then the CO(2) group is transferred by the carboxyltransferase to acetyl-CoA to form malonyl-CoA. The protein is Acetyl-coenzyme A carboxylase carboxyl transferase subunit alpha of Chlamydia abortus (strain DSM 27085 / S26/3) (Chlamydophila abortus).